The following is a 313-amino-acid chain: GTPase Era (313 aa).

One can recognise an Era-type G domain in the interval 13 to 186 (RSGFVSFVGR…ADLLVGLLPE (174 aa)). The tract at residues 21 to 28 (GRPNAGKS) is G1. 21-28 (GRPNAGKS) serves as a coordination point for GTP. Residues 47–51 (QTTRT) are G2. The interval 68–71 (DTPG) is G3. GTP-binding positions include 68 to 72 (DTPGL) and 131 to 134 (TKTD). Positions 131-134 (TKTD) are G4. The G5 stretch occupies residues 165 to 167 (VSA). In terms of domain architecture, KH type-2 spans 217–299 (LRDELPHSVA…YLDLHVKIAK (83 aa)).

Belongs to the TRAFAC class TrmE-Era-EngA-EngB-Septin-like GTPase superfamily. Era GTPase family. In terms of assembly, monomer.

The protein resides in the cytoplasm. It localises to the cell membrane. Its function is as follows. An essential GTPase that binds both GDP and GTP, with rapid nucleotide exchange. Plays a role in 16S rRNA processing and 30S ribosomal subunit biogenesis and possibly also in cell cycle regulation and energy metabolism. This is GTPase Era from Nocardioides sp. (strain ATCC BAA-499 / JS614).